Reading from the N-terminus, the 129-residue chain is MAKIYATGKRKTAIAKVWLTPGSGKLTVNGTTLNDWLGGHEAIKMKVMQPLLLTKQEKSVDIVSVTLGGGYSAQAEALRHGISKALSAYDIAFRAILKPKGLLTRDSRVVERKKYGKRKARRSPQFSKR.

It belongs to the universal ribosomal protein uS9 family.

The sequence is that of Small ribosomal subunit protein uS9 from Wolinella succinogenes (strain ATCC 29543 / DSM 1740 / CCUG 13145 / JCM 31913 / LMG 7466 / NCTC 11488 / FDC 602W) (Vibrio succinogenes).